We begin with the raw amino-acid sequence, 413 residues long: uncharacterized protein (413 aa).

4 helical membrane-spanning segments follow: residues 22–42 (VLLV…TLIL), 270–290 (IIYV…ISIC), 312–332 (ILIQ…GNLI), and 379–399 (LIII…YPIY).

It belongs to the ABC-4 integral membrane protein family. LolC/E subfamily.

It is found in the cell membrane. This is an uncharacterized protein from Buchnera aphidicola subsp. Schizaphis graminum (strain Sg).